The sequence spans 268 residues: Shikimate dehydrogenase (NADP(+)) (268 aa).

Shikimate-binding positions include 15-17 and threonine 60; that span reads SKS. The Proton acceptor role is filled by lysine 64. Positions 85 and 101 each coordinate shikimate. NADP(+)-binding positions include 121–125 and leucine 208; that span reads GAGGS. Residue tyrosine 210 participates in shikimate binding. Glycine 230 is a binding site for NADP(+).

This sequence belongs to the shikimate dehydrogenase family. Homodimer.

It carries out the reaction shikimate + NADP(+) = 3-dehydroshikimate + NADPH + H(+). The protein operates within metabolic intermediate biosynthesis; chorismate biosynthesis; chorismate from D-erythrose 4-phosphate and phosphoenolpyruvate: step 4/7. Its function is as follows. Involved in the biosynthesis of the chorismate, which leads to the biosynthesis of aromatic amino acids. Catalyzes the reversible NADPH linked reduction of 3-dehydroshikimate (DHSA) to yield shikimate (SA). The protein is Shikimate dehydrogenase (NADP(+)) of Helicobacter hepaticus (strain ATCC 51449 / 3B1).